The following is a 93-amino-acid chain: Protein salt-induced and EIN3/EIL1-dependent 1 (93 aa).

The segment covering 23–36 (SSLLTESSSSSLCS) has biased composition (low complexity). Residues 23–46 (SSLLTESSSSSLCSEEAEGGGGEA) are disordered.

With respect to regulation, triggered by EIN3. Its function is as follows. Involved in ethylene-dependent salt stress responses by reducing reactive oxygen species (ROS) accumulation. The polypeptide is Protein salt-induced and EIN3/EIL1-dependent 1 (Arabidopsis thaliana (Mouse-ear cress)).